We begin with the raw amino-acid sequence, 179 residues long: Large ribosomal subunit protein uL6 (179 aa).

Belongs to the universal ribosomal protein uL6 family. In terms of assembly, part of the 50S ribosomal subunit.

In terms of biological role, this protein binds to the 23S rRNA, and is important in its secondary structure. It is located near the subunit interface in the base of the L7/L12 stalk, and near the tRNA binding site of the peptidyltransferase center. The sequence is that of Large ribosomal subunit protein uL6 from Finegoldia magna (strain ATCC 29328 / DSM 20472 / WAL 2508) (Peptostreptococcus magnus).